We begin with the raw amino-acid sequence, 264 residues long: uncharacterized protein (264 aa).

The next 4 membrane-spanning stretches (helical) occupy residues valine 43–isoleucine 63, phenylalanine 68–isoleucine 88, isoleucine 96–isoleucine 116, and leucine 150–valine 170. Positions serine 216 to threonine 247 are disordered. A compositionally biased stretch (low complexity) spans serine 224–proline 237.

The protein resides in the membrane. This is an uncharacterized protein from Caenorhabditis elegans.